The following is a 100-amino-acid chain: MRKMMQREVTYTTAQLARMKMEDGQVTAEVLEPVTLIGNLSVEQAQREINKRPEFKENPAQVVGVEPNTQLYELPLDVFLEHATVKERPAAKEEVAEVQA.

A DNA-binding region spans residues 1 to 19; sequence MRKMMQREVTYTTAQLARM.

This sequence belongs to the phi29likevirus histone-like protein p6 family. Homodimer. Homomultimer. Binds to double-stranded DNA giving rise to multimeric nucleoprotein complexes. Binding specificity for the viral DNA is based on supercoiling, the viral genome having a negative superhelicity lower than that of plasmid DNA. Interacts with the DNA replication protein p17; this interaction optimizes the binding of protein p6 at the viral DNA ends, thus favoring the initiation of replication.

In terms of biological role, histone-like nucleoprotein that binds to the viral dsDNA and responsible for wrapping and compacting the viral DNA about 4-fold. Forms a nucleoprotein complex in which the DNA adopts a right-handed toroidal conformation winding around a protein core. Binds ito most, if not all, the viral genome, although with different affinity, the highest one corresponding to the genome ends. The formation of the nucleoprotein complex at the genome ends, activates the initiation of viral DNA replication. The binding of p6 would recruit the complex formed by the TP and the DNA polymerase to the origin. Protein p6 also represses early transcription from promoter C2, and, together with protein p4, represses transcription from promoters A2b and A2c and activates late transcription from promoter A3. Protein p6 is therefore involved in the early to late transcription switch. The formation of the nucleoprotein complex at the right end of the phage genome where the early promoter C2 is located affects local topology, which may contribute to the promoter repression. The chain is Histone-like protein p6 (6) from Bacillus phage B103 (Bacteriophage B103).